A 37-amino-acid polypeptide reads, in one-letter code: Large ribosomal subunit protein bL36 (37 aa).

The protein belongs to the bacterial ribosomal protein bL36 family.

In Methylibium petroleiphilum (strain ATCC BAA-1232 / LMG 22953 / PM1), this protein is Large ribosomal subunit protein bL36.